The following is a 357-amino-acid chain: Dihydroflavonol 4-reductase (357 aa).

NADP(+) contacts are provided by Lys49 and Tyr168.

Belongs to the NAD(P)-dependent epimerase/dehydratase family. Dihydroflavonol-4-reductase subfamily.

It catalyses the reaction a (2R,3S,4S)-leucoanthocyanidin + NADP(+) = a (2R,3R)-dihydroflavonol + NADPH + H(+). The enzyme catalyses (2S)-flavan-4-ol + NADP(+) = (2S)-flavanone + NADPH + H(+). Its pathway is pigment biosynthesis; anthocyanin biosynthesis. In terms of biological role, bifunctional enzyme involved in flavonoid metabolism. The polypeptide is Dihydroflavonol 4-reductase (A1) (Zea mays (Maize)).